The primary structure comprises 1207 residues: AP-3 complex subunit delta-1 (1207 aa).

Residue alanine 2 is modified to N-acetylalanine. 9 HEAT repeats span residues 34 to 71, 142 to 179, 180 to 216, 218 to 254, 257 to 296, 298 to 336, 337 to 373, 375 to 409, and 521 to 558; these read KYISQCIDEIKQELKQDNIAVKANAVCKLTYLQMLGYD, DLARDLANDIMTLMSHTKPYIRKKAVLIMYKVFLKYPE, SLRPAFPRLKEKLEDPDPGVQSAAVNVICELARRNPK, YLSLAPLFFKLMTSSTNNWVLIKIIKLFGALTPLEPR, KKLIEPLTNLIHSTSAMSLLYECVNTVIAVLISLSSGMPN, SASIQLCVQKLRILIEDSDQNLKYLGLLAMSKILRTHPK, SVQAHKDLVLQCLDDKDESIRLRALDLLYGMVSKKNL, EIVKKLMTHVDKAEGTTYRDELLTKIIDICSQSNY, and VYVQNVVKLYAAILQQKEQAADTSAAQEVTQLLVERLP. Disordered stretches follow at residues 630-695 and 731-970; these read PLSD…RYQD and RRHR…EEPL. Residues serine 632, serine 634, and serine 636 each carry the phosphoserine modification. The span at 648 to 675 shows a compositional bias: basic and acidic residues; it reads EEQRHTKPRAPEADEQELARRREARRQE. Positions 659 to 679 form a coiled coil; the sequence is EADEQELARRREARRQEQANN. Position 688 is a phosphoserine (serine 688). Positions 725–752 form a coiled coil; the sequence is VKLEEERRHRQRLEKDKRKKKKRERERR. Basic and acidic residues predominate over residues 731-740; the sequence is RRHRQRLEKD. The segment covering 741-759 has biased composition (basic residues); the sequence is KRKKKKRERERRGTRRHSS. Phosphoserine occurs at positions 758 and 759. Threonine 762 is subject to Phosphothreonine. Residues serine 764, serine 788, and serine 829 each carry the phosphoserine modification. A compositionally biased stretch (acidic residues) spans 777-794; that stretch reads VTEEMPENALPSDEDDKD. Over residues 795-840 the composition is skewed to basic and acidic residues; that stretch reads PNDPYRALDIDLDKPLADSEKLPVQKHRNAETSKSPEKEDVPLVEK. Residues 841–854 show a composition bias toward basic residues; sequence KSKKPKKKEKKHKE. The stretch at 846 to 870 forms a coiled coil; that stretch reads KKKEKKHKEKEREKKKKEVEKGEDL. 2 stretches are compositionally biased toward basic and acidic residues: residues 855 to 869 and 899 to 908; these read KEREKKKKEVEKGED and EGQEEPRGEE. Over residues 923–933 the composition is skewed to basic residues; that stretch reads PSKHKKKKHKK. Acidic residues predominate over residues 952–969; it reads ADEEAAEPVENGTLEEEP.

This sequence belongs to the adaptor complexes large subunit family. As to quaternary structure, AP-3 associates with the BLOC-1 complex. Adaptor protein complex 3 (AP-3) is a heterotetramer composed of two large adaptins (delta-type subunit AP3D1 and beta-type subunit AP3B1 or AP3B2), a medium adaptin (mu-type subunit AP3M1 or AP3M2) and a small adaptin (sigma-type subunit APS1 or AP3S2). Interacts with SLC30A2. Interacts with CLN3 (via dileucine motif); this interaction facilitates lysosomal targeting.

The protein resides in the cytoplasm. The protein localises to the golgi apparatus membrane. Its function is as follows. Part of the AP-3 complex, an adaptor-related complex which is not clathrin-associated. The complex is associated with the Golgi region as well as more peripheral structures. It facilitates the budding of vesicles from the Golgi membrane and may be directly involved in trafficking to lysosomes. Involved in process of CD8+ T-cell and NK cell degranulation. In concert with the BLOC-1 complex, AP-3 is required to target cargos into vesicles assembled at cell bodies for delivery into neurites and nerve terminals. The sequence is that of AP-3 complex subunit delta-1 (AP3D1) from Bos taurus (Bovine).